The chain runs to 758 residues: Probable ubiquitin carboxyl-terminal hydrolase creB (758 aa).

The tract at residues 1 to 27 (MGSFLRSFRRDVGSSTPSVGATPAKKE) is disordered. Positions 57-468 (FGMENYGNTC…CAYVLFYQET (412 aa)) constitute a USP domain. Catalysis depends on Cys-66, which acts as the Nucleophile. 2 disordered regions span residues 116-148 (AEAQAEKQRLANAQRPGAPPAQPPKPEDKDSSE) and 243-268 (QPIPSLPPADTTDSSRQSISSGSKTP). Polar residues predominate over residues 253–268 (TTDSSRQSISSGSKTP). Catalysis depends on His-419, which acts as the Proton acceptor. The segment at 514-744 (IPVQDEPQRH…KGDRAGHGKW (231 aa)) is disordered. Over residues 554 to 563 (ATPPPVPPIP) the composition is skewed to pro residues. Residues 573–631 (KKSDIQSKKERAKEEKERKAAEKEMEKQRRKEQEARVKENQRREEAELKAALEASKASK) adopt a coiled-coil conformation. Composition is skewed to basic and acidic residues over residues 573 to 650 (KKSD…DPKR) and 729 to 740 (DALKSPKGDRAG).

Belongs to the peptidase C19 family. As to quaternary structure, interacts with creA, creC and qutD.

It carries out the reaction Thiol-dependent hydrolysis of ester, thioester, amide, peptide and isopeptide bonds formed by the C-terminal Gly of ubiquitin (a 76-residue protein attached to proteins as an intracellular targeting signal).. Its function is as follows. Ubiquitin thioesterase component of the regulatory network controlling carbon source utilization through ubiquitination and deubiquitination involving creA, creB, creC, creD and acrB. Deubiquitinates the creA catabolic repressor and the quinate permease qutD. Also plays a role in response to carbon starvation and the control of extracellular proteases activity. This is Probable ubiquitin carboxyl-terminal hydrolase creB (creB) from Aspergillus niger (strain ATCC MYA-4892 / CBS 513.88 / FGSC A1513).